The following is a 476-amino-acid chain: ATP synthase subunit beta (476 aa).

154–161 (GGAGVGKT) contacts ATP.

Belongs to the ATPase alpha/beta chains family. F-type ATPases have 2 components, CF(1) - the catalytic core - and CF(0) - the membrane proton channel. CF(1) has five subunits: alpha(3), beta(3), gamma(1), delta(1), epsilon(1). CF(0) has four main subunits: a(1), b(1), b'(1) and c(9-12).

The protein localises to the cell inner membrane. It catalyses the reaction ATP + H2O + 4 H(+)(in) = ADP + phosphate + 5 H(+)(out). In terms of biological role, produces ATP from ADP in the presence of a proton gradient across the membrane. The catalytic sites are hosted primarily by the beta subunits. This chain is ATP synthase subunit beta, found in Rhodopseudomonas palustris (strain BisA53).